The chain runs to 285 residues: 4-diphosphocytidyl-2-C-methyl-D-erythritol kinase (285 aa).

Lys14 is an active-site residue. Residue 97-107 (PMGGGIGGGSS) participates in ATP binding. Asp139 is an active-site residue.

This sequence belongs to the GHMP kinase family. IspE subfamily.

The enzyme catalyses 4-CDP-2-C-methyl-D-erythritol + ATP = 4-CDP-2-C-methyl-D-erythritol 2-phosphate + ADP + H(+). It functions in the pathway isoprenoid biosynthesis; isopentenyl diphosphate biosynthesis via DXP pathway; isopentenyl diphosphate from 1-deoxy-D-xylulose 5-phosphate: step 3/6. Its function is as follows. Catalyzes the phosphorylation of the position 2 hydroxy group of 4-diphosphocytidyl-2C-methyl-D-erythritol. This Tolumonas auensis (strain DSM 9187 / NBRC 110442 / TA 4) protein is 4-diphosphocytidyl-2-C-methyl-D-erythritol kinase.